We begin with the raw amino-acid sequence, 484 residues long: Protein nucleotidyltransferase YdiU (484 aa).

ATP contacts are provided by Gly92, Gly94, Arg95, Lys115, Asp127, Gly128, Arg178, and Arg185. Asp258 (proton acceptor) is an active-site residue. Positions 259 and 268 each coordinate Mg(2+). Residue Asp268 coordinates ATP.

It belongs to the SELO family. Mg(2+) is required as a cofactor. Mn(2+) serves as cofactor.

The enzyme catalyses L-seryl-[protein] + ATP = 3-O-(5'-adenylyl)-L-seryl-[protein] + diphosphate. It carries out the reaction L-threonyl-[protein] + ATP = 3-O-(5'-adenylyl)-L-threonyl-[protein] + diphosphate. The catalysed reaction is L-tyrosyl-[protein] + ATP = O-(5'-adenylyl)-L-tyrosyl-[protein] + diphosphate. It catalyses the reaction L-histidyl-[protein] + UTP = N(tele)-(5'-uridylyl)-L-histidyl-[protein] + diphosphate. The enzyme catalyses L-seryl-[protein] + UTP = O-(5'-uridylyl)-L-seryl-[protein] + diphosphate. It carries out the reaction L-tyrosyl-[protein] + UTP = O-(5'-uridylyl)-L-tyrosyl-[protein] + diphosphate. Functionally, nucleotidyltransferase involved in the post-translational modification of proteins. It can catalyze the addition of adenosine monophosphate (AMP) or uridine monophosphate (UMP) to a protein, resulting in modifications known as AMPylation and UMPylation. The sequence is that of Protein nucleotidyltransferase YdiU from Mycolicibacterium smegmatis (strain ATCC 700084 / mc(2)155) (Mycobacterium smegmatis).